The following is a 220-amino-acid chain: Deoxyribose-phosphate aldolase (220 aa).

The Proton donor/acceptor role is filled by Asp-89. The Schiff-base intermediate with acetaldehyde role is filled by Lys-151. Lys-180 functions as the Proton donor/acceptor in the catalytic mechanism.

The protein belongs to the DeoC/FbaB aldolase family. DeoC type 1 subfamily.

The protein localises to the cytoplasm. It carries out the reaction 2-deoxy-D-ribose 5-phosphate = D-glyceraldehyde 3-phosphate + acetaldehyde. It functions in the pathway carbohydrate degradation; 2-deoxy-D-ribose 1-phosphate degradation; D-glyceraldehyde 3-phosphate and acetaldehyde from 2-deoxy-alpha-D-ribose 1-phosphate: step 2/2. Functionally, catalyzes a reversible aldol reaction between acetaldehyde and D-glyceraldehyde 3-phosphate to generate 2-deoxy-D-ribose 5-phosphate. The polypeptide is Deoxyribose-phosphate aldolase (Staphylococcus saprophyticus subsp. saprophyticus (strain ATCC 15305 / DSM 20229 / NCIMB 8711 / NCTC 7292 / S-41)).